A 453-amino-acid chain; its full sequence is Tubulin delta chain (453 aa).

143-149 (AGGTGSG) is a binding site for GTP.

Belongs to the tubulin family. Found in a complex with TEDC1, TEDC2, TUBE1 and TUBD1.

The protein resides in the nucleus. It is found in the cytoplasm. Its subcellular location is the cytoskeleton. It localises to the microtubule organizing center. The protein localises to the centrosome. The protein resides in the centriole. It is found in the cell projection. Its subcellular location is the cilium. In terms of biological role, acts as a positive regulator of hedgehog signaling and regulates ciliary function. The protein is Tubulin delta chain (TUBD1) of Homo sapiens (Human).